The following is a 629-amino-acid chain: 1-deoxy-D-xylulose-5-phosphate synthase (629 aa).

Residues His79 and 119–121 (SHA) contribute to the thiamine diphosphate site. A Mg(2+)-binding site is contributed by Asp150. Thiamine diphosphate-binding positions include 151-152 (GS), Asn180, Tyr292, and Glu377. Mg(2+) is bound at residue Asn180.

This sequence belongs to the transketolase family. DXPS subfamily. In terms of assembly, homodimer. Mg(2+) serves as cofactor. Thiamine diphosphate is required as a cofactor.

It carries out the reaction D-glyceraldehyde 3-phosphate + pyruvate + H(+) = 1-deoxy-D-xylulose 5-phosphate + CO2. It participates in metabolic intermediate biosynthesis; 1-deoxy-D-xylulose 5-phosphate biosynthesis; 1-deoxy-D-xylulose 5-phosphate from D-glyceraldehyde 3-phosphate and pyruvate: step 1/1. Catalyzes the acyloin condensation reaction between C atoms 2 and 3 of pyruvate and glyceraldehyde 3-phosphate to yield 1-deoxy-D-xylulose-5-phosphate (DXP). In Tropheryma whipplei (strain TW08/27) (Whipple's bacillus), this protein is 1-deoxy-D-xylulose-5-phosphate synthase.